A 372-amino-acid polypeptide reads, in one-letter code: Queuine tRNA-ribosyltransferase (372 aa).

Asp92 (proton acceptor) is an active-site residue. Residues 92–96 (DSGGF), Asp146, Gln188, and Gly215 each bind substrate. Positions 246–252 (GIGTLRE) are RNA binding. The active-site Nucleophile is the Asp265. Residues 270-274 (TRLGR) form an RNA binding; important for wobble base 34 recognition region. Positions 303, 305, 308, and 334 each coordinate Zn(2+).

The protein belongs to the queuine tRNA-ribosyltransferase family. Homodimer. Within each dimer, one monomer is responsible for RNA recognition and catalysis, while the other monomer binds to the replacement base PreQ1. It depends on Zn(2+) as a cofactor.

The enzyme catalyses 7-aminomethyl-7-carbaguanine + guanosine(34) in tRNA = 7-aminomethyl-7-carbaguanosine(34) in tRNA + guanine. Its pathway is tRNA modification; tRNA-queuosine biosynthesis. Functionally, catalyzes the base-exchange of a guanine (G) residue with the queuine precursor 7-aminomethyl-7-deazaguanine (PreQ1) at position 34 (anticodon wobble position) in tRNAs with GU(N) anticodons (tRNA-Asp, -Asn, -His and -Tyr). Catalysis occurs through a double-displacement mechanism. The nucleophile active site attacks the C1' of nucleotide 34 to detach the guanine base from the RNA, forming a covalent enzyme-RNA intermediate. The proton acceptor active site deprotonates the incoming PreQ1, allowing a nucleophilic attack on the C1' of the ribose to form the product. After dissociation, two additional enzymatic reactions on the tRNA convert PreQ1 to queuine (Q), resulting in the hypermodified nucleoside queuosine (7-(((4,5-cis-dihydroxy-2-cyclopenten-1-yl)amino)methyl)-7-deazaguanosine). The chain is Queuine tRNA-ribosyltransferase from Synechococcus sp. (strain CC9311).